The sequence spans 293 residues: 4-hydroxybenzoate octaprenyltransferase (293 aa).

The next 8 helical transmembrane spans lie at 41-61 (FAAA…LGVI), 98-118 (TEAK…DLLL), 122-142 (TFLL…MKRF), 145-165 (LPQV…YGAV), 167-187 (ESLP…TVAY), 218-238 (IIAL…WISQ), 241-261 (WGYF…CWLT), and 272-292 (AFLN…VGIY).

This sequence belongs to the UbiA prenyltransferase family. Mg(2+) is required as a cofactor.

It localises to the cell inner membrane. The enzyme catalyses all-trans-octaprenyl diphosphate + 4-hydroxybenzoate = 4-hydroxy-3-(all-trans-octaprenyl)benzoate + diphosphate. It participates in cofactor biosynthesis; ubiquinone biosynthesis. Catalyzes the prenylation of para-hydroxybenzoate (PHB) with an all-trans polyprenyl group. Mediates the second step in the final reaction sequence of ubiquinone-8 (UQ-8) biosynthesis, which is the condensation of the polyisoprenoid side chain with PHB, generating the first membrane-bound Q intermediate 3-octaprenyl-4-hydroxybenzoate. This Actinobacillus pleuropneumoniae serotype 5b (strain L20) protein is 4-hydroxybenzoate octaprenyltransferase.